A 314-amino-acid polypeptide reads, in one-letter code: Protein OPG185 (314 aa).

An N-terminal signal peptide occupies residues 1-16 (MTRLPILLLLISLVYA). The Ig-like V-type domain maps to 17 to 121 (TPFPQTSKKI…NDTDKVDYEE (105 aa)). Residues 17 to 278 (TPFPQTSKKI…SNYKTKDFVE (262 aa)) are Virion surface-facing. C34 and C103 are disulfide-bonded. N-linked (GlcNAc...) asparagine; by host glycans are attached at residues N37, N69, N112, and N161. Over residues 193 to 202 (NTVSASSGES) the composition is skewed to polar residues. The segment at 193–214 (NTVSASSGESTTDETPEPITDK) is disordered. Residue N253 is glycosylated (N-linked (GlcNAc...) asparagine; by host). The helical transmembrane segment at 279 to 302 (IFGITALIILSAVAIFCITYYIYN) threads the bilayer. The Intravirion portion of the chain corresponds to 303–314 (KRSRKYKTENKV).

This sequence belongs to the orthopoxvirus OPG185 family. As to quaternary structure, heterodimerizes with OPG040. The heterodimer OPG185-OPG040 interacts with components of the entry fusion complex OPG143 and OPG094. Heterodimer with C3/VPC protein; disulfide-linked. In terms of processing, glycosylated; contains phosphate and sulfate-substituted glycans. O-glycosylation is required for hemagglutination and hemadsorption activities of infected cell membranes.

Its subcellular location is the virion membrane. It localises to the host membrane. Functionally, prevents cell to cell fusion by interacting with and directing the viral OPG040 protein on the host plasma membrane. The OPG185-OPG040 complex associates with components of the entry fusion complex (EFC) presumably to avoid superinfection and syncytium formation. Via its interaction with C3/VCP protein, protects the infected cell and probably also the extracellular enveloped virus from complement attack. This is Protein OPG185 (OPG185) from Bos taurus (Bovine).